Consider the following 244-residue polypeptide: Orotidine 5'-phosphate decarboxylase (244 aa).

Substrate-binding positions include D10, K32, 59-68 (DLKLHDIPNT), T122, R184, Q193, G213, and R214. K61 functions as the Proton donor in the catalytic mechanism.

This sequence belongs to the OMP decarboxylase family. Type 1 subfamily. As to quaternary structure, homodimer.

The catalysed reaction is orotidine 5'-phosphate + H(+) = UMP + CO2. The protein operates within pyrimidine metabolism; UMP biosynthesis via de novo pathway; UMP from orotate: step 2/2. In terms of biological role, catalyzes the decarboxylation of orotidine 5'-monophosphate (OMP) to uridine 5'-monophosphate (UMP). The protein is Orotidine 5'-phosphate decarboxylase of Bacillus caldolyticus.